The following is a 546-amino-acid chain: Chaperonin GroEL (546 aa).

Residues 30 to 33, Lys51, 87 to 91, Gly415, 479 to 481, and Asp495 contribute to the ATP site; these read TLGP, DGTTT, and NAA. The disordered stretch occupies residues 526 to 546; it reads KKDEPAMPAGGGMGGMGGMDF. The span at 534–546 shows a compositional bias: gly residues; the sequence is AGGGMGGMGGMDF.

It belongs to the chaperonin (HSP60) family. In terms of assembly, forms a cylinder of 14 subunits composed of two heptameric rings stacked back-to-back. Interacts with the co-chaperonin GroES.

The protein resides in the cytoplasm. The catalysed reaction is ATP + H2O + a folded polypeptide = ADP + phosphate + an unfolded polypeptide.. Functionally, together with its co-chaperonin GroES, plays an essential role in assisting protein folding. The GroEL-GroES system forms a nano-cage that allows encapsulation of the non-native substrate proteins and provides a physical environment optimized to promote and accelerate protein folding. The polypeptide is Chaperonin GroEL (Xanthomonas oryzae pv. oryzae (strain MAFF 311018)).